Reading from the N-terminus, the 344-residue chain is tRNA N6-adenosine threonylcarbamoyltransferase (344 aa).

Residues H112 and H116 each contribute to the Fe cation site. Residues 134-138 (LASGG), D167, G180, and N280 contribute to the substrate site. D308 lines the Fe cation pocket.

This sequence belongs to the KAE1 / TsaD family. It depends on Fe(2+) as a cofactor.

The protein localises to the cytoplasm. It carries out the reaction L-threonylcarbamoyladenylate + adenosine(37) in tRNA = N(6)-L-threonylcarbamoyladenosine(37) in tRNA + AMP + H(+). Functionally, required for the formation of a threonylcarbamoyl group on adenosine at position 37 (t(6)A37) in tRNAs that read codons beginning with adenine. Is involved in the transfer of the threonylcarbamoyl moiety of threonylcarbamoyl-AMP (TC-AMP) to the N6 group of A37, together with TsaE and TsaB. TsaD likely plays a direct catalytic role in this reaction. This is tRNA N6-adenosine threonylcarbamoyltransferase from Rickettsia conorii (strain ATCC VR-613 / Malish 7).